A 214-amino-acid chain; its full sequence is MKFFLDTANVEAIRAINELGVVDGVTTNPSIISREGRDFETVIKEICEIVDGPISAEVTGLTAEEMIAEARNIAKWHDNVVVKIPMTTEGLKATNVLSQEGIKTNVTLIFTVSQGLMAMKAGATYISPFIGRLEDIGADPYQLISDLRGIIDLYGFQAEIIAASIRTAAHVEAVAQLGAHIATIPDPLFAKMTEHPLTTNGLKTFMEDWASFKK.

The active-site Schiff-base intermediate with substrate is Lys83.

Belongs to the transaldolase family. Type 3B subfamily.

The protein localises to the cytoplasm. It carries out the reaction D-sedoheptulose 7-phosphate + D-glyceraldehyde 3-phosphate = D-erythrose 4-phosphate + beta-D-fructose 6-phosphate. The protein operates within carbohydrate degradation; pentose phosphate pathway; D-glyceraldehyde 3-phosphate and beta-D-fructose 6-phosphate from D-ribose 5-phosphate and D-xylulose 5-phosphate (non-oxidative stage): step 2/3. Transaldolase is important for the balance of metabolites in the pentose-phosphate pathway. This is Probable transaldolase from Streptococcus equi subsp. equi (strain 4047).